A 105-amino-acid polypeptide reads, in one-letter code: MNDILIKLEQVLEQRKSAKVDESYISSLYNKGTDEILKKIAEESAEVIMAAKDGVNDKIIYEVADLWFHTLVLLRFKEIKVNQITNELSRRFGLSGLQEKAKRNN.

The protein belongs to the PRA-PH family.

It is found in the cytoplasm. It catalyses the reaction 1-(5-phospho-beta-D-ribosyl)-ATP + H2O = 1-(5-phospho-beta-D-ribosyl)-5'-AMP + diphosphate + H(+). It functions in the pathway amino-acid biosynthesis; L-histidine biosynthesis; L-histidine from 5-phospho-alpha-D-ribose 1-diphosphate: step 2/9. This is Phosphoribosyl-ATP pyrophosphatase from Ruthia magnifica subsp. Calyptogena magnifica.